A 256-amino-acid chain; its full sequence is Thiazole synthase (256 aa).

Lys96 serves as the catalytic Schiff-base intermediate with DXP. 1-deoxy-D-xylulose 5-phosphate contacts are provided by residues Gly157, 183 to 184, and 205 to 206; these read AG and NT.

It belongs to the ThiG family. Homotetramer. Forms heterodimers with either ThiH or ThiS.

It is found in the cytoplasm. It carries out the reaction [ThiS sulfur-carrier protein]-C-terminal-Gly-aminoethanethioate + 2-iminoacetate + 1-deoxy-D-xylulose 5-phosphate = [ThiS sulfur-carrier protein]-C-terminal Gly-Gly + 2-[(2R,5Z)-2-carboxy-4-methylthiazol-5(2H)-ylidene]ethyl phosphate + 2 H2O + H(+). It participates in cofactor biosynthesis; thiamine diphosphate biosynthesis. Its function is as follows. Catalyzes the rearrangement of 1-deoxy-D-xylulose 5-phosphate (DXP) to produce the thiazole phosphate moiety of thiamine. Sulfur is provided by the thiocarboxylate moiety of the carrier protein ThiS. In vitro, sulfur can be provided by H(2)S. The polypeptide is Thiazole synthase (Bacillus cereus (strain 03BB102)).